A 379-amino-acid chain; its full sequence is Glutamate 5-kinase (379 aa).

K14 contributes to the ATP binding site. Residues S54, D141, and N153 each contribute to the substrate site. ATP is bound by residues 173-174 and 215-221; these read TD and TGGMATK. The region spanning 280–358 is the PUA domain; it reads KGRLLLDIGA…DEIEPLLGYD (79 aa).

Belongs to the glutamate 5-kinase family.

The protein resides in the cytoplasm. The enzyme catalyses L-glutamate + ATP = L-glutamyl 5-phosphate + ADP. It participates in amino-acid biosynthesis; L-proline biosynthesis; L-glutamate 5-semialdehyde from L-glutamate: step 1/2. Its function is as follows. Catalyzes the transfer of a phosphate group to glutamate to form L-glutamate 5-phosphate. This is Glutamate 5-kinase from Shewanella amazonensis (strain ATCC BAA-1098 / SB2B).